Reading from the N-terminus, the 278-residue chain is Small ribosomal subunit protein uS2 (278 aa).

Serine 2 carries the N-acetylserine modification. Positions 258–278 (TNEGKTAADEWATGAQTQSNW) are disordered.

The protein belongs to the universal ribosomal protein uS2 family. In terms of assembly, component of the small ribosomal subunit. Mature ribosomes consist of a small (40S) and a large (60S) subunit. The 40S subunit contains about 33 different proteins and 1 molecule of RNA (18S). The 60S subunit contains about 49 different proteins and 3 molecules of RNA (28S, 5.8S and 5S). Interacts with rps-21.

The protein resides in the cytoplasm. Its function is as follows. Required for the assembly and/or stability of the 40S ribosomal subunit. Required for the processing of the 20S rRNA-precursor to mature 18S rRNA in a late step of the maturation of 40S ribosomal subunits. This Caenorhabditis briggsae protein is Small ribosomal subunit protein uS2.